We begin with the raw amino-acid sequence, 228 residues long: Movement and silencing protein TGBp1 (228 aa).

One can recognise a (+)RNA virus helicase ATP-binding domain in the interval 1–132; that stretch reads MDVLLSLLSE…KCTAQLLNDL (132 aa). The 96-residue stretch at 133–228 folds into the (+)RNA virus helicase C-terminal domain; that stretch reads SYEVESDLAD…LSPNATYTAS (96 aa).

It belongs to the Tymovirales TGBp1 protein family. In terms of assembly, homodimer and homooligomer. Interacts with capsid protein. Interacts with host AGO1; this interaction targets the host protein for degradation, thereby suppressing the antiviral RNA silencing.

It is found in the host cytoplasm. Its function is as follows. Transports viral genome to neighboring plant cells directly through plasmosdesmata, without any budding. The movement protein allows efficient cell to cell propagation, by bypassing the host cell wall barrier. Increases plasmodesma size exclusion limit. Acts as a suppressor of RNA-mediated gene silencing, also known as post-transcriptional gene silencing (PTGS), a mechanism of plant viral defense that limits the accumulation of viral RNAs. This is Movement and silencing protein TGBp1 from Lilium (LSV).